The primary structure comprises 984 residues: Mediator of RNA polymerase II transcription subunit 5 (984 aa).

This sequence belongs to the Mediator complex subunit 5 family. In terms of assembly, component of the Mediator complex.

The protein resides in the nucleus. Functionally, component of the Mediator complex, a coactivator involved in the regulated transcription of nearly all RNA polymerase II-dependent genes. Mediator functions as a bridge to convey information from gene-specific regulatory proteins to the basal RNA polymerase II transcription machinery. Mediator is recruited to promoters by direct interactions with regulatory proteins and serves as a scaffold for the assembly of a functional preinitiation complex with RNA polymerase II and the general transcription factors. The chain is Mediator of RNA polymerase II transcription subunit 5 (NUT1) from Phaeosphaeria nodorum (strain SN15 / ATCC MYA-4574 / FGSC 10173) (Glume blotch fungus).